A 26-amino-acid polypeptide reads, in one-letter code: AMP deaminase 1 (26 aa).

Belongs to the metallo-dependent hydrolases superfamily. Adenosine and AMP deaminases family. Homotetramer.

The enzyme catalyses AMP + H2O + H(+) = IMP + NH4(+). Its pathway is purine metabolism; IMP biosynthesis via salvage pathway; IMP from AMP: step 1/1. Its function is as follows. AMP deaminase plays a critical role in energy metabolism. This Gallus gallus (Chicken) protein is AMP deaminase 1 (AMPD1).